A 105-amino-acid chain; its full sequence is MALRYPMAVGLNKGHKVTKNVSKPRHSRRRGRLTKHTKFVRDMIREVCGFAPYERRAMELLKVSKDKRALKFIKKRVGTHIRAKRKREELSNVLAAMRKAAAKKD.

N6-acetyllysine is present on Lys62.

This sequence belongs to the eukaryotic ribosomal protein eL36 family. As to quaternary structure, component of the large ribosomal subunit.

It is found in the cytoplasm. Its subcellular location is the cytosol. Component of the large ribosomal subunit. The ribosome is a large ribonucleoprotein complex responsible for the synthesis of proteins in the cell. In Homo sapiens (Human), this protein is Large ribosomal subunit protein eL36 (RPL36).